The sequence spans 93 residues: MAKSSASSLSSAKPVAAGPDASAPALPVSYEAALQELEGLVSRLESGQLPLDQLLAGYQRGAQLLKFCRDRLEAVETQIKVLEGTELKPWLQA.

A compositionally biased stretch (low complexity) spans 1–17 (MAKSSASSLSSAKPVAA). The tract at residues 1–22 (MAKSSASSLSSAKPVAAGPDAS) is disordered.

Belongs to the XseB family. In terms of assembly, heterooligomer composed of large and small subunits.

Its subcellular location is the cytoplasm. It carries out the reaction Exonucleolytic cleavage in either 5'- to 3'- or 3'- to 5'-direction to yield nucleoside 5'-phosphates.. Bidirectionally degrades single-stranded DNA into large acid-insoluble oligonucleotides, which are then degraded further into small acid-soluble oligonucleotides. The chain is Exodeoxyribonuclease 7 small subunit from Polaromonas naphthalenivorans (strain CJ2).